We begin with the raw amino-acid sequence, 152 residues long: Xanthine-guanine phosphoribosyltransferase (152 aa).

5-phospho-alpha-D-ribose 1-diphosphate contacts are provided by residues 37–38 (RG), R69, and 88–96 (DDLVDTGGT). R69 is a GMP binding site. D89 is a binding site for Mg(2+). Guanine-binding residues include D92 and I135. Xanthine contacts are provided by D92 and I135. Residues 92–96 (DTGGT) and 134–135 (WI) contribute to the GMP site.

The protein belongs to the purine/pyrimidine phosphoribosyltransferase family. XGPT subfamily. As to quaternary structure, homotetramer. Mg(2+) is required as a cofactor.

The protein localises to the cell inner membrane. It catalyses the reaction GMP + diphosphate = guanine + 5-phospho-alpha-D-ribose 1-diphosphate. It carries out the reaction XMP + diphosphate = xanthine + 5-phospho-alpha-D-ribose 1-diphosphate. The enzyme catalyses IMP + diphosphate = hypoxanthine + 5-phospho-alpha-D-ribose 1-diphosphate. It functions in the pathway purine metabolism; GMP biosynthesis via salvage pathway; GMP from guanine: step 1/1. It participates in purine metabolism; XMP biosynthesis via salvage pathway; XMP from xanthine: step 1/1. Purine salvage pathway enzyme that catalyzes the transfer of the ribosyl-5-phosphate group from 5-phospho-alpha-D-ribose 1-diphosphate (PRPP) to the N9 position of the 6-oxopurines guanine and xanthine to form the corresponding ribonucleotides GMP (guanosine 5'-monophosphate) and XMP (xanthosine 5'-monophosphate), with the release of PPi. To a lesser extent, also acts on hypoxanthine. The protein is Xanthine-guanine phosphoribosyltransferase of Escherichia coli (strain UTI89 / UPEC).